The following is a 102-amino-acid chain: UPF0045 protein Mb1933 (102 aa).

It belongs to the UPF0045 family.

The sequence is that of UPF0045 protein Mb1933 from Mycobacterium bovis (strain ATCC BAA-935 / AF2122/97).